A 293-amino-acid polypeptide reads, in one-letter code: MPWIQMKMNTSGAQAEELGDALIENGAVSVTFQDTHDNPVFEPLPGETRLWGDTDVIGLFDAETDMADVIAGLEHHPLLGSGFHHKIEQIEDKDWEREWMTNFHPMRFGQRLWICPSWRDVPDPNAVNVMLDPGLAFGTGTHPTTALCLTWLDGLDLAGKTIIDFGCGSGILAIAALKLGAAAAIGIDIDPQAIQASRDNAERNGVSDRLSLYLPHQQPDNLIADVVVANILAGPLRELAPLISVLPKRGGHLGLSGVLASQASGVCEAYADLFELDAVAEKEEWCRITGVRR.

Thr145, Gly166, Asp188, and Asn230 together coordinate S-adenosyl-L-methionine.

The protein belongs to the methyltransferase superfamily. PrmA family.

The protein resides in the cytoplasm. The enzyme catalyses L-lysyl-[protein] + 3 S-adenosyl-L-methionine = N(6),N(6),N(6)-trimethyl-L-lysyl-[protein] + 3 S-adenosyl-L-homocysteine + 3 H(+). Functionally, methylates ribosomal protein L11. This Erwinia tasmaniensis (strain DSM 17950 / CFBP 7177 / CIP 109463 / NCPPB 4357 / Et1/99) protein is Ribosomal protein L11 methyltransferase.